Consider the following 197-residue polypeptide: CASP-like protein 1B2 (197 aa).

Residue Ala-2 is modified to N-acetylalanine. Topologically, residues 2-17 (AREKIVVAGGTTKSWK) are cytoplasmic. The chain crosses the membrane as a helical span at residues 18–38 (LLLGLRIFAFMATLAAAIVMS). Topologically, residues 39 to 69 (LNKETKTLVVATIGTVPIKATLTAKFQHTPA) are extracellular. A helical transmembrane segment spans residues 70–90 (FVFFVIANVMVSFHNLLMIVV). Residues 91–106 (QIFSRKLEYKGLRLLS) are Cytoplasmic-facing. The helical transmembrane segment at 107 to 127 (IAILDMLNATLVSAAANAAVF) threads the bilayer. Over 128 to 156 (VAELGKNGNKHAKWNKVCDRFTTYCDHGA) the chain is Extracellular. The chain crosses the membrane as a helical span at residues 157 to 177 (GAIIAAFAGVILMLLVSAVSI). The Cytoplasmic segment spans residues 178–197 (SRLLINSKNFSTTATTTSVV).

Belongs to the Casparian strip membrane proteins (CASP) family. Homodimer and heterodimers.

The protein resides in the cell membrane. In Arabidopsis thaliana (Mouse-ear cress), this protein is CASP-like protein 1B2.